A 610-amino-acid chain; its full sequence is UvrABC system protein C (610 aa).

A GIY-YIG domain is found at 16–94; the sequence is SQPGVYRMYD…IKLYQPRYNV (79 aa). The UVR domain maps to 204–239; the sequence is QQVLTQLITRMEEASQQLHFEDAARIRDQIQAVRRV.

It belongs to the UvrC family. In terms of assembly, interacts with UvrB in an incision complex.

Its subcellular location is the cytoplasm. The UvrABC repair system catalyzes the recognition and processing of DNA lesions. UvrC both incises the 5' and 3' sides of the lesion. The N-terminal half is responsible for the 3' incision and the C-terminal half is responsible for the 5' incision. The chain is UvrABC system protein C from Yersinia pseudotuberculosis serotype O:1b (strain IP 31758).